Reading from the N-terminus, the 407-residue chain is Phosphopentomutase (407 aa).

Mn(2+) contacts are provided by Asp10, Asp307, His312, Asp348, His349, and His360.

It belongs to the phosphopentomutase family. The cofactor is Mn(2+).

It localises to the cytoplasm. The enzyme catalyses 2-deoxy-alpha-D-ribose 1-phosphate = 2-deoxy-D-ribose 5-phosphate. It catalyses the reaction alpha-D-ribose 1-phosphate = D-ribose 5-phosphate. It participates in carbohydrate degradation; 2-deoxy-D-ribose 1-phosphate degradation; D-glyceraldehyde 3-phosphate and acetaldehyde from 2-deoxy-alpha-D-ribose 1-phosphate: step 1/2. Its function is as follows. Isomerase that catalyzes the conversion of deoxy-ribose 1-phosphate (dRib-1-P) and ribose 1-phosphate (Rib-1-P) to deoxy-ribose 5-phosphate (dRib-5-P) and ribose 5-phosphate (Rib-5-P), respectively. This is Phosphopentomutase from Methylobacterium nodulans (strain LMG 21967 / CNCM I-2342 / ORS 2060).